Here is a 453-residue protein sequence, read N- to C-terminus: Ribulose bisphosphate carboxylase large chain (453 aa).

Residues 1 to 2 (MS) constitute a propeptide that is removed on maturation. P3 bears the N-acetylproline mark. K14 bears the N6,N6,N6-trimethyllysine mark. Positions 123 and 173 each coordinate substrate. Catalysis depends on K175, which acts as the Proton acceptor. A substrate-binding site is contributed by K177. K201, D203, and E204 together coordinate Mg(2+). N6-carboxylysine is present on K201. Catalysis depends on H294, which acts as the Proton acceptor. Substrate contacts are provided by R295, H327, and S379.

It belongs to the RuBisCO large chain family. Type I subfamily. As to quaternary structure, heterohexadecamer of 8 large chains and 8 small chains; disulfide-linked. The disulfide link is formed within the large subunit homodimers. Requires Mg(2+) as cofactor. Post-translationally, the disulfide bond which can form in the large chain dimeric partners within the hexadecamer appears to be associated with oxidative stress and protein turnover.

It is found in the plastid. The protein resides in the chloroplast. The catalysed reaction is 2 (2R)-3-phosphoglycerate + 2 H(+) = D-ribulose 1,5-bisphosphate + CO2 + H2O. It catalyses the reaction D-ribulose 1,5-bisphosphate + O2 = 2-phosphoglycolate + (2R)-3-phosphoglycerate + 2 H(+). RuBisCO catalyzes two reactions: the carboxylation of D-ribulose 1,5-bisphosphate, the primary event in carbon dioxide fixation, as well as the oxidative fragmentation of the pentose substrate in the photorespiration process. Both reactions occur simultaneously and in competition at the same active site. The polypeptide is Ribulose bisphosphate carboxylase large chain (Rubia tinctorum (Madder)).